Consider the following 1223-residue polypeptide: ATP-dependent DNA helicase P143 (1223 aa).

The Nuclear localization signal signature appears at 692–701 (RKCRCVQKIK). 919-926 (GVPLSGKS) contributes to the ATP binding site. Residues 967–981 (TINELKKCSESFFKK) constitute a DNA-binding region (H-T-H motif).

The protein resides in the host nucleus. It catalyses the reaction ATP + H2O = ADP + phosphate + H(+). Essential for the initiation of viral DNA replication, it may contribute to other functions such as controlling the switch to the late phase and leading to the inhibition of host protein synthesis. Required for late and very late gene expression. The polypeptide is ATP-dependent DNA helicase P143 (P143) (Orgyia pseudotsugata multicapsid polyhedrosis virus (OpMNPV)).